Consider the following 155-residue polypeptide: Nuclear cap-binding protein subunit 2 (155 aa).

MRNA is bound by residues tyrosine 19, tyrosine 42, 111–115, 122–126, and 132–133; these read RTDWD, RQYGR, and QV. The RRM domain maps to 39 to 117; that stretch reads NTLYVGNLSF…RIIRTDWDAG (79 aa). The interval 122-155 is disordered; sequence RQYGRGKSGGQVRDEYRQDYDPARGGYGKVVSRP. Over residues 133 to 143 the composition is skewed to basic and acidic residues; the sequence is VRDEYRQDYDP.

It belongs to the RRM NCBP2 family. Component of the nuclear cap-binding complex (CBC), a heterodimer composed of ncbp1/cbp80 and ncbp2/cbp20 that interacts with m7GpppG-capped RNA.

It is found in the nucleus. The protein localises to the cytoplasm. Its function is as follows. Component of the cap-binding complex (CBC), which binds co-transcriptionally to the 5' cap of pre-mRNAs and is involved in various processes such as pre-mRNA splicing, translation regulation, nonsense-mediated mRNA decay, RNA-mediated gene silencing (RNAi) by microRNAs (miRNAs) and mRNA export. The CBC complex is involved in mRNA export from the nucleus, leading to the recruitment of the mRNA export machinery to the 5' end of mRNA and to mRNA export in a 5' to 3' direction through the nuclear pore. The CBC complex is also involved in mediating U snRNA and intronless mRNAs export from the nucleus. The CBC complex is essential for a pioneer round of mRNA translation, before steady state translation when the CBC complex is replaced by cytoplasmic cap-binding protein eIF4E. The pioneer round of mRNA translation mediated by the CBC complex plays a central role in nonsense-mediated mRNA decay (NMD), NMD only taking place in mRNAs bound to the CBC complex, but not on eIF4E-bound mRNAs. The CBC complex enhances NMD in mRNAs containing at least one exon-junction complex (EJC), promoting the interaction between upf1 and upf2. The CBC complex is also involved in 'failsafe' NMD, which is independent of the EJC complex, while it does not participate in Staufen-mediated mRNA decay (SMD). During cell proliferation, the CBC complex is also involved in microRNAs (miRNAs) biogenesis via its interaction with srrt/ars2, thereby being required for miRNA-mediated RNA interference. The CBC complex also acts as a negative regulator of parn, thereby acting as an inhibitor of mRNA deadenylation. In the CBC complex, ncbp2/cbp20 recognizes and binds capped RNAs (m7GpppG-capped RNA) but requires ncbp1/cbp80 to stabilize the movement of its N-terminal loop and lock the CBC into a high affinity cap-binding state with the cap structure. The conventional cap-binding complex with NCBP2 binds both small nuclear RNA (snRNA) and messenger (mRNA) and is involved in their export from the nucleus. The sequence is that of Nuclear cap-binding protein subunit 2 (ncbp2) from Salmo salar (Atlantic salmon).